The chain runs to 515 residues: 2-isopropylmalate synthase (515 aa).

Residues Val5–His267 form the Pyruvate carboxyltransferase domain. Positions 14, 202, 204, and 238 each coordinate Mn(2+). A regulatory domain region spans residues Val392–His515.

Belongs to the alpha-IPM synthase/homocitrate synthase family. LeuA type 1 subfamily. As to quaternary structure, homodimer. It depends on Mn(2+) as a cofactor.

It is found in the cytoplasm. The catalysed reaction is 3-methyl-2-oxobutanoate + acetyl-CoA + H2O = (2S)-2-isopropylmalate + CoA + H(+). The protein operates within amino-acid biosynthesis; L-leucine biosynthesis; L-leucine from 3-methyl-2-oxobutanoate: step 1/4. In terms of biological role, catalyzes the condensation of the acetyl group of acetyl-CoA with 3-methyl-2-oxobutanoate (2-ketoisovalerate) to form 3-carboxy-3-hydroxy-4-methylpentanoate (2-isopropylmalate). This Haemophilus influenzae (strain ATCC 51907 / DSM 11121 / KW20 / Rd) protein is 2-isopropylmalate synthase.